The sequence spans 187 residues: ATP synthase subunit b 2 (187 aa).

A compositionally biased stretch (polar residues) spans 1-13 (MAESHATGTTTHT). Residues 1–21 (MAESHATGTTTHTEVPHGKPE) are disordered. A helical transmembrane segment spans residues 31 to 53 (ASQLVSFAIAFALLYVIVSRFAL).

Belongs to the ATPase B chain family. As to quaternary structure, F-type ATPases have 2 components, F(1) - the catalytic core - and F(0) - the membrane proton channel. F(1) has five subunits: alpha(3), beta(3), gamma(1), delta(1), epsilon(1). F(0) has three main subunits: a(1), b(2) and c(10-14). The alpha and beta chains form an alternating ring which encloses part of the gamma chain. F(1) is attached to F(0) by a central stalk formed by the gamma and epsilon chains, while a peripheral stalk is formed by the delta and b chains.

It is found in the cell inner membrane. F(1)F(0) ATP synthase produces ATP from ADP in the presence of a proton or sodium gradient. F-type ATPases consist of two structural domains, F(1) containing the extramembraneous catalytic core and F(0) containing the membrane proton channel, linked together by a central stalk and a peripheral stalk. During catalysis, ATP synthesis in the catalytic domain of F(1) is coupled via a rotary mechanism of the central stalk subunits to proton translocation. Functionally, component of the F(0) channel, it forms part of the peripheral stalk, linking F(1) to F(0). The b'-subunit is a diverged and duplicated form of b found in plants and photosynthetic bacteria. This is ATP synthase subunit b 2 (atpF2) from Afipia carboxidovorans (strain ATCC 49405 / DSM 1227 / KCTC 32145 / OM5) (Oligotropha carboxidovorans).